The following is a 282-amino-acid chain: N-acetylaspartate synthetase (282 aa).

A helical transmembrane segment spans residues 103-125 (FLTVMCYVMTKSFTLTFCAPFIL). The 160-residue stretch at 110–269 (VMTKSFTLTF…RSPLERLFFQ (160 aa)) folds into the N-acetyltransferase domain.

This sequence belongs to the NAT8 family.

It is found in the cytoplasm. The protein resides in the microsome membrane. The protein localises to the mitochondrion membrane. Its subcellular location is the endoplasmic reticulum membrane. It catalyses the reaction L-aspartate + acetyl-CoA = N-acetyl-L-aspartate + CoA + H(+). Functionally, catalyzes the synthesis of N-acetylaspartate acid (NAA) from L-aspartate and acetyl-CoA. This chain is N-acetylaspartate synthetase (nat8l), found in Danio rerio (Zebrafish).